The primary structure comprises 329 residues: D-alanine--D-alanine ligase (329 aa).

In terms of domain architecture, ATP-grasp spans 120 to 326 (KLWLSAIGIP…FADYLEQILR (207 aa)). ATP is bound at residue 150 to 205 (ALAKWGKVFIKAASQGSSVGCYSASNEADLVKGIADAFGYSEQVLIEKAVKPRELE). Residues Asp-280, Glu-293, and Asn-295 each contribute to the Mg(2+) site.

Belongs to the D-alanine--D-alanine ligase family. It depends on Mg(2+) as a cofactor. Mn(2+) serves as cofactor.

The protein localises to the cytoplasm. It carries out the reaction 2 D-alanine + ATP = D-alanyl-D-alanine + ADP + phosphate + H(+). It participates in cell wall biogenesis; peptidoglycan biosynthesis. Functionally, cell wall formation. The polypeptide is D-alanine--D-alanine ligase (Aeromonas hydrophila subsp. hydrophila (strain ATCC 7966 / DSM 30187 / BCRC 13018 / CCUG 14551 / JCM 1027 / KCTC 2358 / NCIMB 9240 / NCTC 8049)).